We begin with the raw amino-acid sequence, 200 residues long: MLKYPDYISKLISFLKKLPGIGFKSAEKIAFELLEWDPSQIEAMAQALQEFSTSHATCSNCFCLKISQTSPCNFCSESRDSSSLCIVATPKDVFALEKSKIFKGHYFVLGNLLSPITGKHLSLEKLAILKQRIEACSPKEMIIALDATLEGDATALFLKQEFSYLPIKISRLALGMPVGLSFDFVDANTLARAFSGRNCF.

A C4-type zinc finger spans residues 58–75 (CSNCFCLKISQTSPCNFC). In terms of domain architecture, Toprim spans 82-177 (SSLCIVATPK…KISRLALGMP (96 aa)).

Belongs to the RecR family.

In terms of biological role, may play a role in DNA repair. It seems to be involved in an RecBC-independent recombinational process of DNA repair. It may act with RecF and RecO. This Chlamydia trachomatis serovar D (strain ATCC VR-885 / DSM 19411 / UW-3/Cx) protein is Recombination protein RecR.